The following is a 276-amino-acid chain: ADP-dependent (S)-NAD(P)H-hydrate dehydratase (276 aa).

The 268-residue stretch at 7–274 folds into the YjeF C-terminal domain; the sequence is METLNSINIP…NEIPYAMKQL (268 aa). Alanine 42, glycine 105, and histidine 154 together coordinate (6S)-NADPHX. Glycine 216 contributes to the AMP binding site. Residue aspartate 217 coordinates (6S)-NADPHX.

Belongs to the NnrD/CARKD family. As to quaternary structure, homotetramer. Requires Mg(2+) as cofactor.

It carries out the reaction (6S)-NADHX + ADP = AMP + phosphate + NADH + H(+). The catalysed reaction is (6S)-NADPHX + ADP = AMP + phosphate + NADPH + H(+). Functionally, catalyzes the dehydration of the S-form of NAD(P)HX at the expense of ADP, which is converted to AMP. Together with NAD(P)HX epimerase, which catalyzes the epimerization of the S- and R-forms, the enzyme allows the repair of both epimers of NAD(P)HX, a damaged form of NAD(P)H that is a result of enzymatic or heat-dependent hydration. The sequence is that of ADP-dependent (S)-NAD(P)H-hydrate dehydratase from Staphylococcus aureus (strain NCTC 8325 / PS 47).